Reading from the N-terminus, the 179-residue chain is NADH-quinone oxidoreductase subunit I (179 aa).

4Fe-4S ferredoxin-type domains lie at 49–79 (LTRD…LQKG) and 89–118 (EFFR…LTPD). [4Fe-4S] cluster-binding residues include C59, C62, C65, C69, C98, C101, C104, and C108.

Belongs to the complex I 23 kDa subunit family. NDH-1 is composed of 14 different subunits. Subunits NuoA, H, J, K, L, M, N constitute the membrane sector of the complex. [4Fe-4S] cluster serves as cofactor.

Its subcellular location is the cell inner membrane. It catalyses the reaction a quinone + NADH + 5 H(+)(in) = a quinol + NAD(+) + 4 H(+)(out). NDH-1 shuttles electrons from NADH, via FMN and iron-sulfur (Fe-S) centers, to quinones in the respiratory chain. The immediate electron acceptor for the enzyme in this species is believed to be ubiquinone. Couples the redox reaction to proton translocation (for every two electrons transferred, four hydrogen ions are translocated across the cytoplasmic membrane), and thus conserves the redox energy in a proton gradient. This Chromohalobacter salexigens (strain ATCC BAA-138 / DSM 3043 / CIP 106854 / NCIMB 13768 / 1H11) protein is NADH-quinone oxidoreductase subunit I.